The following is a 295-amino-acid chain: Diaminopimelate epimerase (295 aa).

Substrate-binding residues include Asn13, Gln46, and Asn66. Cys75 functions as the Proton donor in the catalytic mechanism. Substrate contacts are provided by residues 76–77 (GN), Asn162, Asn195, and 213–214 (ER). The active-site Proton acceptor is the Cys222. 223–224 (GT) provides a ligand contact to substrate.

Belongs to the diaminopimelate epimerase family. As to quaternary structure, homodimer.

It is found in the cytoplasm. The enzyme catalyses (2S,6S)-2,6-diaminopimelate = meso-2,6-diaminopimelate. It functions in the pathway amino-acid biosynthesis; L-lysine biosynthesis via DAP pathway; DL-2,6-diaminopimelate from LL-2,6-diaminopimelate: step 1/1. Its function is as follows. Catalyzes the stereoinversion of LL-2,6-diaminopimelate (L,L-DAP) to meso-diaminopimelate (meso-DAP), a precursor of L-lysine and an essential component of the bacterial peptidoglycan. In Psychrobacter arcticus (strain DSM 17307 / VKM B-2377 / 273-4), this protein is Diaminopimelate epimerase.